A 189-amino-acid polypeptide reads, in one-letter code: uncharacterized protein (189 aa).

Residues M1–A19 form the signal peptide.

This is an uncharacterized protein from Escherichia coli (strain K12).